We begin with the raw amino-acid sequence, 391 residues long: NADH-quinone oxidoreductase subunit D (391 aa).

The protein belongs to the complex I 49 kDa subunit family. As to quaternary structure, NDH-1 is composed of 14 different subunits. Subunits NuoB, C, D, E, F, and G constitute the peripheral sector of the complex.

Its subcellular location is the cell inner membrane. The catalysed reaction is a quinone + NADH + 5 H(+)(in) = a quinol + NAD(+) + 4 H(+)(out). Its function is as follows. NDH-1 shuttles electrons from NADH, via FMN and iron-sulfur (Fe-S) centers, to quinones in the respiratory chain. The immediate electron acceptor for the enzyme in this species is believed to be ubiquinone. Couples the redox reaction to proton translocation (for every two electrons transferred, four hydrogen ions are translocated across the cytoplasmic membrane), and thus conserves the redox energy in a proton gradient. This is NADH-quinone oxidoreductase subunit D from Rickettsia conorii (strain ATCC VR-613 / Malish 7).